The following is a 2335-amino-acid chain: tRNA3(Ser)-specific nuclease WapA (2335 aa).

Positions 1-32 are cleaved as a signal peptide; that stretch reads MKKRKRRTFKRFIAAFLVLSLMISLLPADVLA. The segment at 36 to 81 is disordered; sequence EEEAGNRIVSDDPEETPRNEQTEEAVPFPSKDINKEGEITSERTEN. Positions 67–81 are enriched in basic and acidic residues; sequence DINKEGEITSERTEN. YD repeat units follow at residues 1032–1065, 1076–1103, 1678–1716, 1898–1935, and 2082–2113; these read YNDK…ITGP, SDLL…LVKQ, YDKE…PLGN, YDAN…DGTV, and YNAH…PTKT. Composition is skewed to basic residues over residues 2251-2260 and 2269-2281; these read KKDHGPKSKA and SKFR…RRTT. Residues 2251–2285 are disordered; sequence KKDHGPKSKARMPNGQPKSKFRSAKTLRRTTKATA.

The protein belongs to the RHS/WapA nuclease family.

It is found in the secreted. It localises to the cell wall. In terms of biological role, toxic component of a toxin-immunity protein module, which functions as a cellular contact-dependent growth inhibition (CDI) system. A site-specific tRNA3(Ser) nuclease, the C-terminus (residues 2201-2335) probably removes 2 or 4 nucleotides from the 3' end of tRNA3(Ser) but not tRNA2(Arg) or tRNA(Glu) (upon expression in E.coli), possibly endonucleolytically. The nuclease activity is neutralized by expression of the cognate immunity protein WapI from the same strain, but not its homolog from 2 other B.subtilis strains. The C-terminus cannot be expressed on its own in E.coli, however it can be cloned in the presence of its cognate immunity protein gene wapI. Cell contact is probably necessary for growth inhibition. In Bacillus spizizenii (strain DSM 15029 / JCM 12233 / NBRC 101239 / NRRL B-23049 / TU-B-10) (Bacillus subtilis subsp. spizizenii), this protein is tRNA3(Ser)-specific nuclease WapA (wapA).